Reading from the N-terminus, the 135-residue chain is Transcription antitermination protein NusB (135 aa).

This sequence belongs to the NusB family.

Functionally, involved in transcription antitermination. Required for transcription of ribosomal RNA (rRNA) genes. Binds specifically to the boxA antiterminator sequence of the ribosomal RNA (rrn) operons. The chain is Transcription antitermination protein NusB from Bdellovibrio bacteriovorus (strain ATCC 15356 / DSM 50701 / NCIMB 9529 / HD100).